A 118-amino-acid chain; its full sequence is MARVKRGVIARARHKKILKQAKGYYGARSRVYRVAFQAVIKAGQYAYRDRRQRKRQFRQLWIARINAAARQNGISYSKFINGLKKASVEIDRKILADIAVFDKVAFTTLVEKAKAALA.

The protein belongs to the bacterial ribosomal protein bL20 family.

In terms of biological role, binds directly to 23S ribosomal RNA and is necessary for the in vitro assembly process of the 50S ribosomal subunit. It is not involved in the protein synthesizing functions of that subunit. This is Large ribosomal subunit protein bL20 from Shigella flexneri serotype 5b (strain 8401).